A 231-amino-acid polypeptide reads, in one-letter code: Endonuclease NucS (231 aa).

It belongs to the NucS endonuclease family.

The protein resides in the cytoplasm. Functionally, cleaves both 3' and 5' ssDNA extremities of branched DNA structures. The protein is Endonuclease NucS of Pseudarthrobacter chlorophenolicus (strain ATCC 700700 / DSM 12829 / CIP 107037 / JCM 12360 / KCTC 9906 / NCIMB 13794 / A6) (Arthrobacter chlorophenolicus).